We begin with the raw amino-acid sequence, 363 residues long: Chalcone synthase B (363 aa).

Cys-170 is a catalytic residue.

Belongs to the thiolase-like superfamily. Chalcone/stilbene synthases family.

It catalyses the reaction (E)-4-coumaroyl-CoA + 3 malonyl-CoA + 3 H(+) = 2',4,4',6'-tetrahydroxychalcone + 3 CO2 + 4 CoA. Its pathway is secondary metabolite biosynthesis; flavonoid biosynthesis. Its function is as follows. The primary product of this enzyme is 4,2',4',6'-tetrahydroxychalcone (also termed naringenin-chalcone or chalcone) which can under specific conditions spontaneously isomerize into naringenin. This chain is Chalcone synthase B (CHSB), found in Ipomoea cordatotriloba (Tievine).